The chain runs to 340 residues: Methionine import ATP-binding protein MetN 2 (340 aa).

Positions 2–241 (ITLQNVVKEY…PQEKVTQRFV (240 aa)) constitute an ABC transporter domain. Residue 38 to 45 (GYSGAGKS) coordinates ATP.

Belongs to the ABC transporter superfamily. Methionine importer (TC 3.A.1.24) family. The complex is composed of two ATP-binding proteins (MetN), two transmembrane proteins (MetI) and a solute-binding protein (MetQ).

It is found in the cell membrane. It catalyses the reaction L-methionine(out) + ATP + H2O = L-methionine(in) + ADP + phosphate + H(+). It carries out the reaction D-methionine(out) + ATP + H2O = D-methionine(in) + ADP + phosphate + H(+). Functionally, part of the ABC transporter complex MetNIQ involved in methionine import. Responsible for energy coupling to the transport system. This Listeria monocytogenes serotype 4b (strain F2365) protein is Methionine import ATP-binding protein MetN 2.